A 206-amino-acid polypeptide reads, in one-letter code: Probable N-acetyltransferase 14 (206 aa).

The N-acetyltransferase domain maps to 6–206 (LSVREMREDE…TLVREFSKDL (201 aa)). Residues 57-77 (FVLASFALALLLPVFLAVAAV) form a helical membrane-spanning segment.

The protein belongs to the camello family. In terms of tissue distribution, expressed in K-562 and HeLa cell lines and in brain.

The protein resides in the membrane. Functionally, probable acetyltransferase. May act as a transcription factor that regulates the expression of coproporphyrinogen oxidase by binding to a promoter regulatory element. The polypeptide is Probable N-acetyltransferase 14 (NAT14) (Homo sapiens (Human)).